Here is a 204-residue protein sequence, read N- to C-terminus: 3-isopropylmalate dehydratase small subunit (204 aa).

It belongs to the LeuD family. LeuD type 1 subfamily. Heterodimer of LeuC and LeuD.

The enzyme catalyses (2R,3S)-3-isopropylmalate = (2S)-2-isopropylmalate. Its pathway is amino-acid biosynthesis; L-leucine biosynthesis; L-leucine from 3-methyl-2-oxobutanoate: step 2/4. In terms of biological role, catalyzes the isomerization between 2-isopropylmalate and 3-isopropylmalate, via the formation of 2-isopropylmaleate. The sequence is that of 3-isopropylmalate dehydratase small subunit from Vesicomyosocius okutanii subsp. Calyptogena okutanii (strain HA).